The primary structure comprises 643 residues: Asparagine synthetase domain-containing protein 1 (643 aa).

C2 (for GATase activity) is an active-site residue. The Glutamine amidotransferase type-2 domain maps to 2-184; the sequence is CGICCSVNFS…ASGLFRIDLK (183 aa). Positions 285–601 constitute an Asparagine synthetase domain; it reads QFIDVLSVAV…GLTASALLPK (317 aa).

This chain is Asparagine synthetase domain-containing protein 1 (ASNSD1), found in Homo sapiens (Human).